A 397-amino-acid polypeptide reads, in one-letter code: Glia-derived nexin (397 aa).

The first 19 residues, 1 to 19 (MNWHFPFFILTTVTLYSVH), serve as a signal peptide directing secretion. A glycan (N-linked (GlcNAc...) asparagine) is linked at Asn159.

It belongs to the serpin family. In terms of tissue distribution, most abundant in seminal vesicles.

It localises to the secreted. The protein localises to the extracellular space. In terms of biological role, serine protease inhibitor with activity toward thrombin, trypsin, and urokinase. Promotes neurite extension by inhibiting thrombin. Binds heparin. The polypeptide is Glia-derived nexin (Serpine2) (Mus musculus (Mouse)).